A 213-amino-acid chain; its full sequence is Na(+)-translocating NADH-quinone reductase subunit E (213 aa).

The next 6 helical transmembrane spans lie at 12–32 (AVFV…FLAV), 40–60 (IGLG…NQLI), 92–112 (FLGF…LEMF), 124–144 (LGIF…SLFM), 155–175 (VVFG…LAGI), and 191–211 (LGIT…FSGI).

The protein belongs to the NqrDE/RnfAE family. In terms of assembly, composed of six subunits; NqrA, NqrB, NqrC, NqrD, NqrE and NqrF.

Its subcellular location is the cell inner membrane. The enzyme catalyses a ubiquinone + n Na(+)(in) + NADH + H(+) = a ubiquinol + n Na(+)(out) + NAD(+). NQR complex catalyzes the reduction of ubiquinone-1 to ubiquinol by two successive reactions, coupled with the transport of Na(+) ions from the cytoplasm to the periplasm. NqrA to NqrE are probably involved in the second step, the conversion of ubisemiquinone to ubiquinol. This is Na(+)-translocating NADH-quinone reductase subunit E from Rhodopirellula baltica (strain DSM 10527 / NCIMB 13988 / SH1).